Reading from the N-terminus, the 141-residue chain is MTDKMGTDLTSFRGNLNGLYEAIKVQTALQKEAKTIKREQKKIKDEIDTFKTAILEDLKQRDQEGVEFKGLKITIHPKPKRVYFKKADKERLICEALRNCGIEDAQSKTKNVIDAISQIHTETEDTLKIIDSKKEKKVNKY.

Residues 24–52 are a coiled coil; sequence KVQTALQKEAKTIKREQKKIKDEIDTFKT.

This is an uncharacterized protein from Invertebrate iridescent virus 6 (IIV-6).